The chain runs to 437 residues: Phosphomethylpyrimidine synthase (437 aa).

Substrate is bound by residues Asn69, Met98, Tyr127, His163, Ser185–Gly187, Asp226–Arg229, and Glu265. Zn(2+) is bound at residue His269. Tyr292 lines the substrate pocket. His333 provides a ligand contact to Zn(2+). 3 residues coordinate [4Fe-4S] cluster: Cys409, Cys412, and Cys416.

This sequence belongs to the ThiC family. The cofactor is [4Fe-4S] cluster.

The catalysed reaction is 5-amino-1-(5-phospho-beta-D-ribosyl)imidazole + S-adenosyl-L-methionine = 4-amino-2-methyl-5-(phosphooxymethyl)pyrimidine + CO + 5'-deoxyadenosine + formate + L-methionine + 3 H(+). Its pathway is cofactor biosynthesis; thiamine diphosphate biosynthesis. Functionally, catalyzes the synthesis of the hydroxymethylpyrimidine phosphate (HMP-P) moiety of thiamine from aminoimidazole ribotide (AIR) in a radical S-adenosyl-L-methionine (SAM)-dependent reaction. This Clostridium botulinum (strain Langeland / NCTC 10281 / Type F) protein is Phosphomethylpyrimidine synthase.